Consider the following 85-residue polypeptide: Inhibitor of dGTPase (85 aa).

In terms of assembly, interacts with host dGTPase/dgt.

Plays a role in increasing the intracellular pool of dGTP. Interacts with and inhibits host dGTPase/dgt. The complex made of the host dGTPase and gene 1.2 protein creates a GTP-binding site of high affinity. Subsequent binding of GTP to the enzyme-inhibitor complex inhibits its dissociation. The sequence is that of Inhibitor of dGTPase from Escherichia coli (Bacteriophage T7).